The primary structure comprises 480 residues: Gasdermin-C3 (480 aa).

The segment at 1–226 (MGYSFDRASK…TCVILPSATK (226 aa)) is triggers pyroptosis.

This sequence belongs to the gasdermin family. In terms of assembly, homooligomer; homooligomeric ring-shaped pore complex containing 27-28 subunits when inserted in the membrane. Post-translationally, cleavage by CASP8 relieves autoinhibition by releasing the N-terminal moiety (Gasdermin-C3, N-terminal) that initiates pyroptosis. Palmitoylated.

It localises to the cytoplasm. It is found in the cytosol. The protein resides in the cell membrane. Its activity is regulated as follows. The full-length protein before cleavage is inactive: intramolecular interactions between N- and C-terminal domains mediate autoinhibition in the absence of activation signal. The intrinsic pyroptosis-inducing activity is carried by the released N-terminal moiety (Gasdermin-C3, N-terminal) following cleavage by caspase CASP8. In terms of biological role, this form constitutes the precursor of the pore-forming protein: upon cleavage, the released N-terminal moiety (Gasdermin-C3, N-terminal) binds to membranes and forms pores, triggering pyroptosis. Its function is as follows. Pore-forming protein that causes membrane permeabilization and pyroptosis. Produced by the cleavage of gasdermin-C3 by caspase CASP8 in response to death signals. After cleavage, moves to the plasma membrane where it strongly binds to membrane inner leaflet lipids. Homooligomerizes within the membrane and forms pores of 10-15 nanometers (nm) of inner diameter, triggering pyroptosis. This Mus musculus (Mouse) protein is Gasdermin-C3.